We begin with the raw amino-acid sequence, 594 residues long: Lipolysis-stimulated lipoprotein receptor (594 aa).

An N-terminal signal peptide occupies residues 1 to 35; the sequence is MAPAASACAGAPGSHPATTIFVCLFLIIYCPDRAS. The Extracellular segment spans residues 36–206; the sequence is AIQVTVPDPY…PGFRAGPLED (171 aa). An Ig-like V-type domain is found at 89 to 181; it reads PASVDNQLNA…DLDGNNEAYA (93 aa). A disulfide bridge connects residues cysteine 113 and cysteine 165. The chain crosses the membrane as a helical span at residues 207–227; it reads WLFVVVVCLASLLFFLLLGIC. The Cytoplasmic portion of the chain corresponds to 228-594; it reads WCQCCPHTCC…LALSRESLVV (367 aa). Position 283 is a phosphothreonine (threonine 283). Serine 308 is subject to Phosphoserine; by MAPK8 and MAPK9. Phosphoserine is present on residues serine 314, serine 332, serine 375, and serine 379. A compositionally biased stretch (basic and acidic residues) spans 375–387; it reads SEVTSLHEDDWRS. The interval 375-594 is disordered; it reads SEVTSLHEDD…LALSRESLVV (220 aa). Position 396 is a phosphothreonine (threonine 396). Serine 407, serine 410, and serine 436 each carry phosphoserine. Positions 435–444 are enriched in basic and acidic residues; sequence RSVDALDDIN. Residues 445–460 show a composition bias toward low complexity; it reads RPGSTESGRSSPPSSG. Residues serine 471 and serine 473 each carry the phosphoserine modification. A compositionally biased stretch (basic and acidic residues) spans 472–550; it reads RSRDDLYDPD…GAGERRRVYR (79 aa). Tyrosine 478 carries the post-translational modification Phosphotyrosine. A Phosphoserine modification is found at serine 576. A Glycyl lysine isopeptide (Lys-Gly) (interchain with G-Cter in ubiquitin) cross-link involves residue lysine 583. Residues serine 588 and serine 591 each carry the phosphoserine modification.

The protein belongs to the immunoglobulin superfamily. LISCH7 family. Homotrimer or homotetramer. Assembles into cell-cell contacts. Interacts (via the cytoplasmic domain) with MARVELD2 (via C-terminal cytoplasmic domain); the interaction is required to recruit MARVELD2 to tricellular contacts. Interacts with OCLN. In terms of processing, phosphorylation at Ser-308 by MAPK8/JNK1 and MAPK9/JNK2 may be required for exclusive localization at tricellular tight junstions. Post-translationally, polyubiquitinated at Lys-583 via 'Lys-63'-linked ubiquitin chains; deubiquitinated by USP53. As to expression, expressed in epithelial tissues (at protein level). Specifically expressed in liver and to a lower extent in kidney (at protein level). Also detected in brain, testis, ovaries, adrenal gland, intestine, muscle, and lung. In colon, only expressed in the lower portion of crypts. Expressed in the liver. Expressed in liver, stomach, small intestine and colon. Also detected in other epithelial tissues.

It localises to the cell membrane. It is found in the cell junction. The protein resides in the tight junction. In terms of biological role, probable role in the clearance of triglyceride-rich lipoprotein from blood. Binds chylomicrons, LDL and VLDL in presence of free fatty acids and allows their subsequent uptake in the cells. Maintains epithelial barrier function by recruiting MARVELD2/tricellulin to tricellular tight junctions. This Mus musculus (Mouse) protein is Lipolysis-stimulated lipoprotein receptor.